The sequence spans 419 residues: Carboxypeptidase A2 (419 aa).

Positions methionine 1 to cysteine 18 are cleaved as a signal peptide. The propeptide at leucine 19–arginine 114 is activation peptide. The 293-residue stretch at alanine 122–valine 414 folds into the Peptidase M14 domain. Residues histidine 179 and glutamate 182 each coordinate Zn(2+). Residues histidine 179–glutamate 182, arginine 237, and asparagine 254–arginine 255 contribute to the substrate site. Residues cysteine 248 and cysteine 271 are joined by a disulfide bond. Zn(2+) is bound at residue histidine 306. Position 307-308 (serine 307–tyrosine 308) interacts with substrate. The cysteines at positions 320 and 354 are disulfide-linked. Tyrosine 358 lines the substrate pocket. The active-site Proton donor/acceptor is glutamate 380.

Belongs to the peptidase M14 family. Requires Zn(2+) as cofactor.

It is found in the secreted. It carries out the reaction Similar to that of carboxypeptidase A (EC 3.4.17.1), but with a preference for bulkier C-terminal residues.. Functionally, carboxypeptidase that catalyzes the release of a C-terminal amino acid, with a preference for large aromatic C-terminal residues. The sequence is that of Carboxypeptidase A2 (CPA2) from Homo sapiens (Human).